Consider the following 143-residue polypeptide: MLSPRRTKFRKQHRGRMKGVATRGNQIAFGRFALQAMEASWITSRQIEAGRRAMTRYARRGGKLWIKIFPDKPITMRPAETRMGSGKGAPEYWVAVVKPGRILYEMSGISETIARAAMRIAAYKMPIKTRFIVANLSKNPTND.

Belongs to the universal ribosomal protein uL16 family. As to quaternary structure, part of the 50S ribosomal subunit.

Its subcellular location is the plastid. It localises to the chloroplast. The chain is Large ribosomal subunit protein uL16c from Spirogyra maxima (Green alga).